Consider the following 320-residue polypeptide: Replication-associated protein ORF2 (320 aa).

Residues Y188 and Y192 each act as O-(5'-phospho-DNA)-tyrosine intermediate in the active site.

This sequence belongs to the microviridae Rep protein family.

The catalysed reaction is ATP + (deoxyribonucleotide)n-3'-hydroxyl + 5'-phospho-(deoxyribonucleotide)m = (deoxyribonucleotide)n+m + AMP + diphosphate.. Functionally, plays an essential role in viral DNA replication. Binds the origin of replication and cleaves the dsDNA replicative form I (RFI) and becomes covalently bound to it via phosphotyrosine bond, generating the dsDNA replicative form II (RFII). In turn, viral DNA replication initiates at the 3'-OH of the cleavage site. After one round of rolling circle synthesis, protein ORF2 is linked to the newly synthesized ssDNA and joins the ends of the displaced strand to generate a circular single-stranded molecule ready to be packed into a virion. In Spiroplasma virus 4 (SpV4), this protein is Replication-associated protein ORF2.